A 161-amino-acid chain; its full sequence is Trivalent organoarsenical cleaving enzyme (161 aa).

Residues 2-119 enclose the VOC domain; sequence KYAHVGLNVT…DGNEWEFFYT (118 aa). Residues H5 and H62 each contribute to the Fe(2+) site. Roxarsone (III)-binding residues include C96 and C97. Residue E115 participates in Fe(2+) binding.

Fe(2+) is required as a cofactor.

It carries out the reaction methylarsonous acid + AH2 + O2 = arsenite + methanol + A + H(+). It catalyses the reaction roxarsone (III) + AH2 + O2 = 4-hydroxy-3-nitrocyclohexa-2,5-dien-1-one + arsenite + A + H(+). The enzyme catalyses nitarsone (III) + AH2 + O2 = 4-nitrocyclohexa-2,5-dien-1-one + arsenite + A + H(+). The catalysed reaction is 4-aminophenylarsonous acid + AH2 + O2 = 4-aminocyclohexa-2,5-dien-1-one + arsenite + A. With respect to regulation, inhibited in vitro by reagents that chemically modify histidine residues (diethylpyrocarbonate (DEPC)), aspartate or glutamate residues (1-ethyl-3-(3-(dimethylamino)propyl) carbodiimide (EDC)), or cysteine residues (N-ethylmaleimide (NEM) or iodoacetamide (IAA)). Functionally, nonheme iron-dependent dioxygenase that can break carbon-arsenic bonds, playing a role in the detoxification of environmental organoarsenical compounds. Catalyzes the oxygen-dependent demethylation of highly toxic methylarsonous acid (MAs(III)) to arsenite, which can then be exported out of the cell. Can also cleave the C-As bond in several trivalent aromatic arsenicals, including roxarsone (III), nitarsone (III) and (4-aminophenyl)arsonous acid. Organoarsenical degradation by this enzyme is proposed to have a significant impact on the arsenic biogeocycle that maintains a balance between organic and inorganic species. The chain is Trivalent organoarsenical cleaving enzyme from Bacillus sp. (strain MD1).